The sequence spans 147 residues: 3-dehydroquinate dehydratase (147 aa).

Catalysis depends on Tyr22, which acts as the Proton acceptor. The substrate site is built by Asn76, His82, and Asp89. Residue His102 is the Proton donor of the active site. Residues 103-104 (IS) and Arg113 contribute to the substrate site.

The protein belongs to the type-II 3-dehydroquinase family. In terms of assembly, homododecamer.

The enzyme catalyses 3-dehydroquinate = 3-dehydroshikimate + H2O. The protein operates within metabolic intermediate biosynthesis; chorismate biosynthesis; chorismate from D-erythrose 4-phosphate and phosphoenolpyruvate: step 3/7. Functionally, catalyzes a trans-dehydration via an enolate intermediate. This Fusobacterium nucleatum subsp. nucleatum (strain ATCC 25586 / DSM 15643 / BCRC 10681 / CIP 101130 / JCM 8532 / KCTC 2640 / LMG 13131 / VPI 4355) protein is 3-dehydroquinate dehydratase.